Here is a 221-residue protein sequence, read N- to C-terminus: 2,3-bisphosphoglycerate-dependent phosphoglycerate mutase (221 aa).

Substrate-binding positions include 8 to 15 (RHGNSLWN), 21 to 22 (TG), Arg-60, 87 to 90 (ERHY), Lys-98, 114 to 115 (RR), and 174 to 175 (GN). The Tele-phosphohistidine intermediate role is filled by His-9. The active-site Proton donor/acceptor is Glu-87. The disordered stretch occupies residues 114–140 (RRGYDTPPPPLHSQADDPRYEEPPPLS).

Belongs to the phosphoglycerate mutase family. BPG-dependent PGAM subfamily.

It catalyses the reaction (2R)-2-phosphoglycerate = (2R)-3-phosphoglycerate. It functions in the pathway carbohydrate degradation; glycolysis; pyruvate from D-glyceraldehyde 3-phosphate: step 3/5. Functionally, catalyzes the interconversion of 2-phosphoglycerate and 3-phosphoglycerate. This is 2,3-bisphosphoglycerate-dependent phosphoglycerate mutase from Tropheryma whipplei (strain TW08/27) (Whipple's bacillus).